Here is a 570-residue protein sequence, read N- to C-terminus: Set1/Ash2 histone methyltransferase complex subunit ash-2 (570 aa).

The PHD-type zinc finger occupies 19 to 76; sequence TTVCYCDGKRELGSVEVVCSTCLKWFHGRCLKEFHELNSNGVPFMICYTFTCKQCRPT. The segment at 201-242 is disordered; that stretch reads NREPRHIELPPIEGPKTRGASKRRHAEAPVTGKKQKLAADYS. A B30.2/SPRY domain is found at 270-468; sequence PNVPEDPAWN…TLVEMPGSYI (199 aa).

In terms of assembly, component of the SET2 complex (also known as the SET1/COMPASS complex), which contains at least set-2, swd-2.1, cfp-1, rbbp-5, wdr-5.1, dpy-30 and ash-2. Within the complex, interacts with cfp-1 and wdr-5.1. Expressed in somatic and germline tissues (at protein level).

It localises to the nucleus. Its function is as follows. Component of the set-2/ash-2 histone methyltransferase (HMT) complex. Required for the di- and trimethylation at 'Lys-4' of histone H3, a mark associated with epigenetic transcriptional activation. Implicated in the epigenetic inheritance of lifespan over several generations. Functions as a transcriptional regulator. Acts in the germline to limit the longevity of the soma, probably by regulating a lipid metabolism pathway that signals from the germline to the intestine, thereby preventing accumulation of mono-unsaturated fatty acids. In Caenorhabditis elegans, this protein is Set1/Ash2 histone methyltransferase complex subunit ash-2.